We begin with the raw amino-acid sequence, 380 residues long: Large ribosomal subunit protein mL38 (380 aa).

Residues 1–26 constitute a mitochondrion transit peptide; it reads MAAPWWRVVLNGSRNWRGFSTSAALS. A coiled-coil region spans residues 101-122; sequence QQLLERKRVLRELRTSVEEERA.

Belongs to the phosphatidylethanolamine-binding protein family. Mitochondrion-specific ribosomal protein mL38 subfamily. Component of the mitochondrial ribosome large subunit (39S) which comprises a 16S rRNA and about 50 distinct proteins.

It is found in the mitochondrion. This is Large ribosomal subunit protein mL38 (MRPL38) from Bos taurus (Bovine).